The following is a 279-amino-acid chain: Type III pantothenate kinase (279 aa).

6-13 (DIGNTLSK) is a binding site for ATP. Residues Y92 and 99 to 102 (GVDR) each bind substrate. D101 (proton acceptor) is an active-site residue. D120 contacts K(+). Residue S123 coordinates ATP. T177 contributes to the substrate binding site.

This sequence belongs to the type III pantothenate kinase family. As to quaternary structure, homodimer. It depends on NH4(+) as a cofactor. The cofactor is K(+).

The protein localises to the cytoplasm. The enzyme catalyses (R)-pantothenate + ATP = (R)-4'-phosphopantothenate + ADP + H(+). It participates in cofactor biosynthesis; coenzyme A biosynthesis; CoA from (R)-pantothenate: step 1/5. In terms of biological role, catalyzes the phosphorylation of pantothenate (Pan), the first step in CoA biosynthesis. The protein is Type III pantothenate kinase of Chromohalobacter salexigens (strain ATCC BAA-138 / DSM 3043 / CIP 106854 / NCIMB 13768 / 1H11).